The following is a 263-amino-acid chain: uncharacterized protein (263 aa).

Position 31–38 (31–38 (GPTGSGKT)) interacts with ATP.

The protein belongs to the CbbQ/NirQ/NorQ/GpvN family.

This is an uncharacterized protein from Staphylococcus epidermidis (strain ATCC 35984 / DSM 28319 / BCRC 17069 / CCUG 31568 / BM 3577 / RP62A).